Reading from the N-terminus, the 469-residue chain is 3-isopropylmalate dehydratase large subunit (469 aa).

Positions 349, 410, and 413 each coordinate [4Fe-4S] cluster.

The protein belongs to the aconitase/IPM isomerase family. LeuC type 1 subfamily. Heterodimer of LeuC and LeuD. The cofactor is [4Fe-4S] cluster.

The enzyme catalyses (2R,3S)-3-isopropylmalate = (2S)-2-isopropylmalate. It functions in the pathway amino-acid biosynthesis; L-leucine biosynthesis; L-leucine from 3-methyl-2-oxobutanoate: step 2/4. In terms of biological role, catalyzes the isomerization between 2-isopropylmalate and 3-isopropylmalate, via the formation of 2-isopropylmaleate. This chain is 3-isopropylmalate dehydratase large subunit, found in Neisseria meningitidis serogroup C / serotype 2a (strain ATCC 700532 / DSM 15464 / FAM18).